A 529-amino-acid polypeptide reads, in one-letter code: MLQPPTLTPNANGEEFRGSVSTDRSSASPSNIDEIMEDDVNQKDEDEDLNLVDRVSKLETNFVFIQHQLSSIMNHLHAPQCKCTTCSKVNQPGAEEQKNDTSVLSQLFPNASDQQLKTLLDLSKMNKLPSQVVHKDQQNGSSFLPSANKTSENPKPIELKPLKLGQGYQMANGGGGGKIHTERLSEPARKQSRKVGFPPPVASYYQRKESSNPLVPPTPLSSIPNLITNSNAVSANTSTASPGPSSEGSGDDHLEAPNEVAHMHSSTVPATPTTPGANLFTQSMVDMLKLNAQNAAHSTGSPGFLRGRGRGRPKLIGDELDADLVDYMVSLKNSDPHGGHFTASQALHMARQYILERAPGLLEEHGGHVKLKLTWAMKLVSRIGERQREIELGLPAGTLSNMGRNLTNIPAGGNFMADMMAQNIFSQHMMMVNQQLEGGSPPASSSSTATTSTATKTVKQESKNGHQNEENLNVKQEASTMPEIINIKELNLPFLNNFLAELNDNNSGLIDGEIGAAGPSMAALFAPNA.

Disordered stretches follow at residues 1–39 (MLQP…MEDD), 131–158 (QVVH…KPIE), 173–200 (GGGG…FPPP), and 233–255 (VSAN…DHLE). Polar residues-rich tracts occupy residues 19-31 (SVST…SPSN) and 138-153 (QNGS…TSEN). Positions 179 to 189 (IHTERLSEPAR) are enriched in basic and acidic residues. The span at 233-248 (VSANTSTASPGPSSEG) shows a compositional bias: low complexity. Positions 307–319 (GRGRGRPKLIGDE) form a DNA-binding region, a.T hook. The interval 436–476 (LEGGSPPASSSSTATTSTATKTVKQESKNGHQNEENLNVKQ) is disordered. A compositionally biased stretch (low complexity) spans 443-455 (ASSSSTATTSTAT). The span at 458–469 (VKQESKNGHQNE) shows a compositional bias: basic and acidic residues.

The protein is AT hook-containing protein attf-4 of Caenorhabditis elegans.